Reading from the N-terminus, the 74-residue chain is Conotoxin ArMKLT2-041 (74 aa).

The N-terminal stretch at 1–22 is a signal peptide; that stretch reads MKLTCVLIVAVLFLTACQLIAA. Positions 23–46 are excised as a propeptide; the sequence is DDSRDLQKFPRRKMRDGMLNTKNT. Pyrrolidone carboxylic acid is present on Gln-49. 3 cysteine pairs are disulfide-bonded: Cys-50-Cys-65, Cys-57-Cys-68, and Cys-64-Cys-73.

The protein belongs to the conotoxin O1 superfamily. As to expression, expressed by the venom duct.

The protein localises to the secreted. The polypeptide is Conotoxin ArMKLT2-041 (Conus arenatus (Sand-dusted cone)).